We begin with the raw amino-acid sequence, 1823 residues long: THO complex subunit 2 (1823 aa).

A coiled-coil region spans residues 935–1003 (NRYESEISKQ…RRRLSREKDT (69 aa)). Residues 964-969 (KRKKEK) carry the Nuclear localization signal motif. 2 disordered regions span residues 1244–1382 (LVGV…KDLN) and 1394–1823 (ALSS…GSRE). Basic and acidic residues-rich tracts occupy residues 1272–1283 (QMLKTKPLDGRT), 1312–1330 (KSMEQKETDETPRISDENP), and 1356–1367 (AKQDFGKDDGKS). Positions 1394 to 1409 (ALSSTAANGSIATGSS) are enriched in polar residues. The segment covering 1432–1596 (PRHEIVTSVR…EKSHPDDHFH (165 aa)) has biased composition (basic and acidic residues). The segment covering 1600–1610 (LPPPPPLPPNI) has biased composition (pro residues). Composition is skewed to basic and acidic residues over residues 1616–1625 (AAKEDLERRA), 1636–1648 (PRHEEREKRRSEE), 1655–1706 (DDAK…FEAS), and 1768–1785 (LGKEASSKMARRDPDPIA). Residues serine 1646 and serine 1696 each carry the phosphoserine modification. The span at 1802–1816 (MTVNGKTTRGEQSGS) shows a compositional bias: polar residues.

Belongs to the THOC2 family. In terms of assembly, component of the THO complex, which is composed of THO1, THO2, THO3, THO5, THO6 and THO7.

The protein localises to the nucleus. Its function is as follows. Acts as a component of the THO subcomplex of the TREX complex which is thought to couple mRNA transcription, processing and nuclear export. This chain is THO complex subunit 2 (THO2), found in Arabidopsis thaliana (Mouse-ear cress).